The sequence spans 175 residues: uncharacterized protein (175 aa).

This sequence belongs to the asfivirus B175L family.

This is an uncharacterized protein from Ornithodoros (relapsing fever ticks).